Consider the following 154-residue polypeptide: GTP-dependent dephospho-CoA kinase (154 aa).

Residues aspartate 34, aspartate 53, and glutamate 107 each contribute to the GTP site.

The protein belongs to the GTP-dependent DPCK family.

The enzyme catalyses 3'-dephospho-CoA + GTP = GDP + CoA + H(+). The protein operates within cofactor biosynthesis; coenzyme A biosynthesis. Catalyzes the GTP-dependent phosphorylation of the 3'-hydroxyl group of dephosphocoenzyme A to form coenzyme A (CoA). This Nitrosopumilus maritimus (strain SCM1) protein is GTP-dependent dephospho-CoA kinase.